We begin with the raw amino-acid sequence, 428 residues long: MKKQNLRSLAAQAVEQVVEQGQSLSNVLPPLQQKVSDKDKALLQELCFGVLRTLSQLEWLINKLMSRPMTGKQRTVHYLIMVGFYQLLHTRIPPHAALAETVEGAVAIKRPQLKGLINGVLRQFQRQQEALLAEFATSEARFLHPSWLLKRLQKSYPTQWEAIVEANNQRPPMWLRVNRTHHSRDSWLTLLQDAGMNGFPHSAYPDALRLESPAPVHALPGFEEGWVTVQDASAQGCVSFLAPQNGEKILDLCAAPGGKTTHILEAAPEAQVLAVDVDEQRLSRVYDNLKRLGMKATVKQGDGRYPAQWCGEQKFDRILLDAPCSATGVIRRHPDIKWLRRDRDIAELAKLQSEILDAIWPHLKSGGTLVYATCSVLPEENSQQILAFLQRTPDATLTGTGTPAQPGVQNLPGAEEGDGFFYAKLIKK.

S-adenosyl-L-methionine contacts are provided by residues 253–259, D276, D302, and D321; that span reads CAAPGGK. C374 acts as the Nucleophile in catalysis.

It belongs to the class I-like SAM-binding methyltransferase superfamily. RsmB/NOP family.

It is found in the cytoplasm. The catalysed reaction is cytidine(967) in 16S rRNA + S-adenosyl-L-methionine = 5-methylcytidine(967) in 16S rRNA + S-adenosyl-L-homocysteine + H(+). Its function is as follows. Specifically methylates the cytosine at position 967 (m5C967) of 16S rRNA. The chain is Ribosomal RNA small subunit methyltransferase B from Citrobacter koseri (strain ATCC BAA-895 / CDC 4225-83 / SGSC4696).